Reading from the N-terminus, the 202-residue chain is Recombination protein RecR (202 aa).

Residues 59–74 (CSVCFHLSAEPVCEIC) form a C4-type zinc finger. The region spanning 82–176 (HTICVVADSR…KVTRIAFGLP (95 aa)) is the Toprim domain.

The protein belongs to the RecR family.

May play a role in DNA repair. It seems to be involved in an RecBC-independent recombinational process of DNA repair. It may act with RecF and RecO. This chain is Recombination protein RecR, found in Thermosynechococcus vestitus (strain NIES-2133 / IAM M-273 / BP-1).